A 2170-amino-acid chain; its full sequence is ATP-binding cassette sub-family A member 7 (2170 aa).

The chain crosses the membrane as a helical span at residues 22–42; that stretch reads PIQLVVELLWPLFLFFILVAV. Over 43–547 the chain is Extracellular; the sequence is RHSHPPLEHH…DVFLRVLSRS (505 aa). Cys-75 and Cys-222 are joined by a disulfide. Asn-309 is a glycosylation site (N-linked (GlcNAc...) asparagine). A run of 6 helical transmembrane segments spans residues 548-568, 591-611, 624-644, 653-673, 679-699, and 733-753; these read LPLF…KAVV, LGWF…LVLV, VVVF…SFLL, LAAA…VLCV, LPLG…GFGC, and AFLL…EAVC. Residues 805 to 1036 enclose the ABC transporter 1 domain; sequence VSIRGLKKHF…LGCGYYLTLV (232 aa). ATP is bound at residue 839 to 846; sequence GHNGAGKT. A helical transmembrane segment spans residues 847 to 867; it reads TTLSILSGLFPPSSGSASILG. A disordered region spans residues 1044 to 1086; that stretch reads THDLKGDTEDPRREKKSGSEGKTADTVLTRDGPHRSSQVPAPD. The span at 1045–1066 shows a compositional bias: basic and acidic residues; that stretch reads HDLKGDTEDPRREKKSGSEGKT. The chain crosses the membrane as a helical span at residues 1257–1277; the sequence is IVLPALFVGLALFFTLIVPPF. Over 1278 to 1562 the chain is Extracellular; that stretch reads GQYPPLQLSP…TLIASSVDVL (285 aa). Cys-1370 and Cys-1384 are disulfide-bonded. Helical transmembrane passes span 1563-1583, 1609-1629, 1646-1666, 1674-1694, 1708-1728, and 1754-1774; these read VSIC…LVLI, FLWD…IFLA, LLLL…SFFF, VVLT…TFVL, ILKQ…LIDM, and IIGK…LITL. Positions 1818 to 2050 constitute an ABC transporter 2 domain; the sequence is LVLRDLTKVY…FGAGHTLTLR (233 aa). 1852-1859 is an ATP binding site; that stretch reads GVNGAGKT. A disordered region spans residues 2129-2170; it reads QGEEEEGSGQETETREVSTPGLQHPKRVSRFLEDPSSVETVI.

The protein belongs to the ABC transporter superfamily. ABCA family. In terms of processing, N-glycosylated. As to expression, expressed in blood cells. Also detected in brain and ovary tissues (at protein level). Expressed in platelet.

Its subcellular location is the cell membrane. The protein localises to the golgi apparatus membrane. The protein resides in the early endosome membrane. It localises to the cell projection. It is found in the ruffle membrane. Its subcellular location is the phagocytic cup. The protein localises to the cytoplasm. ATP-binding cassette (ABC) transporter that plays a role in lipid homeostasis and macrophage-mediated phagocytosis. Binds APOA1 and may function in apolipoprotein-mediated phospholipid efflux from cells. May also mediate cholesterol efflux. May regulate cellular ceramide homeostasis during keratinocyte differentiation. Involved in lipid raft organization and CD1D localization on thymocytes and antigen-presenting cells, which plays an important role in natural killer T-cell development and activation. Plays a role in phagocytosis of apoptotic cells by macrophages. Macrophage phagocytosis is stimulated by APOA1 or APOA2, probably by stabilization of ABCA7. Also involved in phagocytic clearance of amyloid-beta by microglia cells and macrophages. Further limits amyloid-beta production by playing a role in the regulation of amyloid-beta A4 precursor protein (APP) endocytosis and/or processing. This chain is ATP-binding cassette sub-family A member 7 (Abca7), found in Rattus norvegicus (Rat).